The sequence spans 385 residues: D-alanyl-D-alanine-carboxypeptidase/endopeptidase AmpH (385 aa).

Positions M1 to A21 are cleaved as a signal peptide.

It belongs to the beta-lactamase family.

The protein resides in the cell inner membrane. Inhibited by cefmetazole. In terms of biological role, hydrolyzes the cross-linked dimers tetrapentapeptide (D45) and tetratetrapeptide (D44). Removes the terminal D-alanine from muropeptides and disaccharide pentapeptide M5 with a C-terminal D-Ala-D-Ala dipeptide. Associated with recycling and remodeling of peptidoglycan (PG). This chain is D-alanyl-D-alanine-carboxypeptidase/endopeptidase AmpH (ampH), found in Escherichia coli O157:H7.